We begin with the raw amino-acid sequence, 156 residues long: Arginine repressor (156 aa).

It belongs to the ArgR family.

Its subcellular location is the cytoplasm. It functions in the pathway amino-acid biosynthesis; L-arginine biosynthesis [regulation]. Functionally, regulates arginine biosynthesis genes. The protein is Arginine repressor of Cronobacter sakazakii (strain ATCC BAA-894) (Enterobacter sakazakii).